Here is a 517-residue protein sequence, read N- to C-terminus: uncharacterized protein (517 aa).

The next 10 helical transmembrane spans lie at 35–55 (FSLIVLSFIVSFFLIVAIPGI), 81–101 (IAIYTLAALAFSFCMSVGVFN), 102–122 (IGISGQMMAGANFGFMMILKV), 135–155 (IITILLMILGSVTVAMVVAAL), 164–184 (VVSAIMLNWVIVLVSAYLVGT), 223–243 (LVIAIAAAIFIAVLMKFTVFG), 268–288 (FLSFVISGILSGLLAAVVYTA), 302–322 (FGITSVPITGFDGIAIGLIAL), 328–348 (IVIVSTIISFVTIGAKPAGLN), and 352–372 (ASLVLGIMMYFAAIYNLMIYI).

The protein localises to the cell membrane. This is an uncharacterized protein from Mycoplasma pneumoniae (strain ATCC 29342 / M129 / Subtype 1) (Mycoplasmoides pneumoniae).